Here is a 1002-residue protein sequence, read N- to C-terminus: Transposase for transposon gamma-delta (1002 aa).

Belongs to the transposase 7 family.

Required for transposition of transposon Tn1000. This chain is Transposase for transposon gamma-delta (tnpA), found in Escherichia coli (strain K12).